The primary structure comprises 337 residues: Monoacylglycerol lipase abhd6-A (337 aa).

Residues 1–19 lie on the Extracellular side of the membrane; the sequence is MDLDVLNMFLVAGGTLLVP. The chain crosses the membrane as a helical; Signal-anchor for type II membrane protein span at residues 20–42; it reads ILAFVTSFLLWPAALIKIYYWYW. Topologically, residues 43–337 are cytoplasmic; sequence RRALGMQVKF…QSTENNKKHE (295 aa). The 241-residue stretch at 73–313 folds into the AB hydrolase-1 domain; sequence SVLMLHGFSA…CGHSVVMERP (241 aa). Serine 148 functions as the Nucleophile in the catalytic mechanism. Active-site charge relay system residues include aspartate 278 and histidine 306.

It belongs to the AB hydrolase superfamily.

It localises to the late endosome membrane. The protein resides in the lysosome membrane. The protein localises to the mitochondrion membrane. It catalyses the reaction Hydrolyzes glycerol monoesters of long-chain fatty acids.. The enzyme catalyses 1-octanoylglycerol + H2O = octanoate + glycerol + H(+). The catalysed reaction is 1-decanoylglycerol + H2O = decanoate + glycerol + H(+). It carries out the reaction 1-dodecanoylglycerol + H2O = dodecanoate + glycerol + H(+). It catalyses the reaction 1-tetradecanoylglycerol + H2O = tetradecanoate + glycerol + H(+). The enzyme catalyses 2-hexadecanoylglycerol + H2O = glycerol + hexadecanoate + H(+). The catalysed reaction is 2-(9Z-octadecenoyl)-glycerol + H2O = glycerol + (9Z)-octadecenoate + H(+). It carries out the reaction 1-(9Z-octadecenoyl)-glycerol + H2O = glycerol + (9Z)-octadecenoate + H(+). It catalyses the reaction 2-(9Z,12Z-octadecadienoyl)-glycerol + H2O = (9Z,12Z)-octadecadienoate + glycerol + H(+). The enzyme catalyses 2-(5Z,8Z,11Z,14Z-eicosatetraenoyl)-glycerol + H2O = glycerol + (5Z,8Z,11Z,14Z)-eicosatetraenoate + H(+). The catalysed reaction is 1-(5Z,8Z,11Z,14Z-eicosatetraenoyl)-glycerol + H2O = glycerol + (5Z,8Z,11Z,14Z)-eicosatetraenoate + H(+). It carries out the reaction 1-(9Z,12Z-octadecadienoyl)-glycerol + H2O = (9Z,12Z)-octadecadienoate + glycerol + H(+). It catalyses the reaction 3-(9Z-octadecenoyl)-sn-glycero-1-phospho-(3'-(9Z-octadecenoyl)-1'-sn-glycerol) + H2O = 3-(9Z-octadecenoyl)-sn-glycero-1-phospho-(1'-sn-glycerol) + (9Z)-octadecenoate + H(+). The enzyme catalyses (S,S)-2-(9Z-octadecenoyl)-sn-glycero-1-phospho-(2'-(9Z-octadecenoyl)-1'-sn-glycerol) + H2O = (S,S)-2-(9Z-octadecenoyl)-sn-glycero-1-phospho-(1'-sn-glycerol) + (9Z)-octadecenoate + H(+). The catalysed reaction is (R,R)-2-(9Z-octadecenoyl)-sn-glycero-3-phospho-(2'-(9Z-octadecenoyl)-3'-sn-glycerol) + H2O = (R,R)-2-(9Z-octadecenoyl)-sn-glycero-3-phospho-(3'-sn-glycerol) + (9Z)-octadecenoate + H(+). Functionally, lipase that preferentially hydrolysis medium-chain saturated monoacylglycerols including 2-arachidonoylglycerol. Through 2-arachidonoylglycerol degradation may regulate endocannabinoid signaling pathways. Also has a lysophosphatidyl lipase activity with a preference for lysophosphatidylglycerol among other lysophospholipids. Also able to degrade bis(monoacylglycero)phosphate (BMP) and constitutes the major enzyme for BMP catabolism. BMP, also known as lysobisphosphatidic acid, is enriched in late endosomes and lysosomes and plays a key role in the formation of intraluminal vesicles and in lipid sorting. This Xenopus laevis (African clawed frog) protein is Monoacylglycerol lipase abhd6-A (abhd6-a).